Consider the following 485-residue polypeptide: Aspartyl/glutamyl-tRNA(Asn/Gln) amidotransferase subunit B (485 aa).

This sequence belongs to the GatB/GatE family. GatB subfamily. As to quaternary structure, heterotrimer of A, B and C subunits.

It carries out the reaction L-glutamyl-tRNA(Gln) + L-glutamine + ATP + H2O = L-glutaminyl-tRNA(Gln) + L-glutamate + ADP + phosphate + H(+). It catalyses the reaction L-aspartyl-tRNA(Asn) + L-glutamine + ATP + H2O = L-asparaginyl-tRNA(Asn) + L-glutamate + ADP + phosphate + 2 H(+). Allows the formation of correctly charged Asn-tRNA(Asn) or Gln-tRNA(Gln) through the transamidation of misacylated Asp-tRNA(Asn) or Glu-tRNA(Gln) in organisms which lack either or both of asparaginyl-tRNA or glutaminyl-tRNA synthetases. The reaction takes place in the presence of glutamine and ATP through an activated phospho-Asp-tRNA(Asn) or phospho-Glu-tRNA(Gln). The polypeptide is Aspartyl/glutamyl-tRNA(Asn/Gln) amidotransferase subunit B (Cupriavidus taiwanensis (strain DSM 17343 / BCRC 17206 / CCUG 44338 / CIP 107171 / LMG 19424 / R1) (Ralstonia taiwanensis (strain LMG 19424))).